The primary structure comprises 333 residues: Taste receptor type 2 member 123 (333 aa).

Topologically, residues 1–13 (MFSQKINYSHLFT) are extracellular. N-linked (GlcNAc...) asparagine glycosylation occurs at Asn-7. The helical transmembrane segment at 14–34 (FSITLYVEIVTGILGHGFIAL) threads the bilayer. Over 35–60 (VNIMDWVKRRRISSVDQILTALALTR) the chain is Cytoplasmic. A helical membrane pass occupies residues 61–81 (FIYVLSMLICILLFMLCPHLP). Residues 82–90 (RRSEMLSAM) lie on the Extracellular side of the membrane. The chain crosses the membrane as a helical span at residues 91–111 (GIFWVVNSHFSIWLTTCLGVF). Over 112–134 (YFLKIANFSNSFFLYLKWRVKKV) the chain is Cytoplasmic. A helical membrane pass occupies residues 135 to 155 (ILIIILASLIFLTLHILSLGI). Residues 156–205 (YDQFSIAAYVGNMSYSLTDLTQFSSTFLFSNSSNVFLITNSSHVFLPINS) lie on the Extracellular side of the membrane. N-linked (GlcNAc...) asparagine glycans are attached at residues Asn-167, Asn-186, and Asn-195. A helical membrane pass occupies residues 206–226 (LFMLIPFTVSLVAFLMLIFSL). The Cytoplasmic segment spans residues 227 to 253 (WKHHKKMQVNAKQPRDVSTMAHIKALQ). Residues 254 to 274 (TVFSFLLLYAIYLLFLIIGIL) traverse the membrane as a helical segment. Residues 275–281 (NLGLMEK) lie on the Extracellular side of the membrane. A helical membrane pass occupies residues 282-302 (IVILIFDHISGAVFPISHSFV). Residues 303–333 (LILGNSKLRQASLSVLPCLRCQSKDMDTMGL) lie on the Cytoplasmic side of the membrane.

It belongs to the G-protein coupled receptor T2R family. In terms of tissue distribution, expressed in subsets of taste receptor cells of the tongue and palate epithelium and exclusively in gustducin-positive cells. Expressed in the duodenum, antrum and fundus (part of the stomach).

The protein resides in the membrane. Its function is as follows. Gustducin-coupled receptor implicated in the perception of bitter compounds in the oral cavity and the gastrointestinal tract. Signals through PLCB2 and the calcium-regulated cation channel TRPM5. The protein is Taste receptor type 2 member 123 (Tas2r123) of Mus musculus (Mouse).